A 112-amino-acid chain; its full sequence is uncharacterized protein (112 aa).

2 N-linked (GlcNAc...) asparagine; by host glycosylation sites follow: Asn-29 and Asn-60. Residues 66–86 form a helical membrane-spanning segment; it reads IFNGLGFILIVIFIYLLLITL.

The protein belongs to the asfivirus B117L family.

It localises to the host membrane. It is found in the virion. This is an uncharacterized protein from Ornithodoros (relapsing fever ticks).